We begin with the raw amino-acid sequence, 1694 residues long: MEGGSEKTTPEGCGGESKSKRKMKTAAQLEVLENTYSAEPYPSEAIRADLSVKLNLSDRQLQMWFCHRRLKERKSTTPSKRQRKELVTPTAMESWEPPVNAGDLVAGNELDSRRAARGSGGSGVTVVRRFNEPSSAEVRAIGYVEAQLGERLRDNGPVLGMEFDPLPPGAFGMPIEMPSHRKATRQAFETNIYVRSDVKPIKDHVRPIREYQFIPELPSSRTDHSERVSPSHHFGVPLDGSVMRVSAVSAGHRDDYKISPQIPNLNLATHQGKPGHVYSPNLVEYDSPYQKSYMDTAAQVHDDPFVKSEREVGNEDEDDDALQLERHRKNEEARIAREVEAHEKRIRRELEKQDMLRRKREEQIRKEMERQDRERRKEEERLLREKQREEERYLKEQMRELQRREKFLKKETIRAEKMRQKEEMRKEKEVARLKAANERAIARKIAKESMELIEDERLELMEVAALTKGLPSMLALDFETLQNLDEYRDKQAIFPPTSVKLKKPFAVKPWNGSDENVANLLMVWRFLITFADVLGLWPFTLDEFAQAFHDYDPRLMGEIHIVLLKTIIKDIEGVVRTLSTGVGANQNVAANPGGGHPHVVEGAYAWGFDIRSWRKNLNVFTWPEILRQLALSAGLGPQLKKMNIRTVSVHDDNEANNSENVIFNLRKGVAAENAFAKMQERGLSNPRRSRHRLTPGTVKFAAFHVLSLEGEKGLNILEVAEKIQKSGLRDLTTSRTPEASVAAALSRDTKLFERVAPSTYCVRASYRKDAGDAETIFAEARERIRAFKSGITDVEDVDDAERDEDSESDVGEDPEVDVNLKKEDPNPLKVENLIGVEPLLENGKLDTVPMKTELGLPLTPSLPEEMKDEKRDDTLADQSLEDAVANGEDSACFDESKLGEQWVQGLVEGDYSNLSSEERLNALVALIGIATEGNTIRIALEERLEVASALKKQMWGEVQLDKRWKEESLIRANYLSYPTAKPGLNIATPASGNQESSSADVTPISSQDPVSLPQIDVNNVIAGPSLQLQENVPGVENLQYQQQQGYTADRERLRAQLKAYVGYKAEELYVYRSLPLGQDRRRNRYWRFSASASRNDPGCGRIFVELQDGRWRLIDSEEAFDYLVKSLDVRGVRESHLHFMLLKIEASFKEALRRNVAANPGVCSISSSLDSDTAEISTTFKIELGDSNAVERCSVLQRFHSFEKWMWDNMLHPSALSAFKYGAKQSSPLFRICRICAELHFVGDICCPSCGQMHAGPDVGELCFAEQVAQLGDNLRRGDTGFILRSSILSPLRIRLLKVQLALVEASLPPEGLEAFWTENLRKSWGMKLLSSSSHEDLYQVLTTLEAALKRDFLSSNFETTSELLGLQEGALASDLTCGVNVLPWIPKTAGGVALRLFDFDSSIVYTPDQNNDPLKDKESEDFVGLETNILRNLHEKDVMETPVQVAAYKQEENWTDPGLGGVSSSGRGGRPPRGRGRPRARGNGKKPAVSVKPPRGAANSNGETMLRPRAQPRGGRKNGRRSGTKGRKRPTQGTLGICNEVGGGRRVKEVAVTAKTSLPDNDDDWIETPELQDDDGEASSSGRSFQYEDYDDDDVMAPIDDFDGGGESSKLVGRGEFSLHSDDEYEEEEEEEEDMNMKMDVNVVDDEDEDYINEDSYGRKQHGISISNDAATRKRFNKFEDPDLTSSSSSDFQ.

The segment at 1 to 24 is disordered; sequence MEGGSEKTTPEGCGGESKSKRKMK. Positions 17 to 76 form a DNA-binding region, homeobox; sequence SKSKRKMKTAAQLEVLENTYSAEPYPSEAIRADLSVKLNLSDRQLQMWFCHRRLKERKST. The 60-residue stretch at 514 to 573 folds into the DDT domain; that stretch reads DENVANLLMVWRFLITFADVLGLWPFTLDEFAQAFHDYDPRLMGEIHIVLLKTIIKDIEG. One can recognise an HTH HARE-type domain in the interval 696–765; that stretch reads GTVKFAAFHV…APSTYCVRAS (70 aa). Acidic residues predominate over residues 795 to 816; sequence EDVDDAERDEDSESDVGEDPEV. Disordered stretches follow at residues 795-822, 1450-1541, 1555-1639, and 1655-1674; these read EDVD…NLKK, KQEE…ICNE, AKTS…MNMK, and EDSY…AATR. Phosphoserine is present on residues S806 and S808. Residues 1459–1470 are compositionally biased toward gly residues; sequence GLGGVSSSGRGG. Composition is skewed to basic residues over residues 1471-1485 and 1515-1531; these read RPPR…RGNG and GGRK…RKRP. 3 stretches are compositionally biased toward acidic residues: residues 1561–1578, 1589–1605, and 1624–1635; these read DNDD…DDGE, EDYD…DFDG, and DEYEEEEEEEED.

In terms of assembly, interacts with CHR11. Interacts (via the DDT domain) with CHR11 (via C-terminus). As to expression, highly expressed in growing tissues such as inflorescence and flower meristems, young leaves and floral organs. Expressed in roots, rosette and cauline leaves, stems, flowers, inflorescences and siliques.

It localises to the nucleus. In terms of biological role, transcriptional regulator required for the maintenance of the plant vegetative phase. In association with CHR11 or CHR17 may prevent the early activation of the vegetative-to-reproductive transition by regulating key genes that contribute to flower timing, such as FT, SEP1, SEP3, AGL8/FUL, SOC1 and FLC. Involved in the transcriptional regulation of seed-specific gene expression. This chain is Homeobox-DDT domain protein RLT2, found in Arabidopsis thaliana (Mouse-ear cress).